A 596-amino-acid chain; its full sequence is Transcription factor IIIB 70 kDa subunit (596 aa).

Residues 1-33 (MPVCKNCHGTEFERDLSNANNDLVCKACGVVSE) form a TFIIB-type zinc finger. Positions 4, 7, 25, and 28 each coordinate Zn(2+). 2 repeat units span residues 90 to 166 (VSYA…KMVK) and 185 to 264 (FAEK…EFKN). 2 disordered regions span residues 363 to 421 (GENI…NESG) and 509 to 534 (IATG…EPTK). Positions 365-375 (NIYHEGSENET) are enriched in basic and acidic residues. Phosphoserine is present on residues Ser381 and Ser384. Residues 388-421 (EHVEGEDKETEGTEEKVKKVKTKTSEEKKENESG) show a composition bias toward basic and acidic residues. Basic residues predominate over residues 516-526 (VKKKRTRRRNN).

Belongs to the TFIIB family. As to quaternary structure, TFIIIB comprises the TATA-binding protein (TBP), the B-related factor (BRF) and the B' component (TFC5).

Its subcellular location is the nucleus. Functionally, general activator of RNA polymerase III transcription. Interacts with TBP. Binds to Pol III subunit C34 and to the TAU135 component of TFIIIC. This chain is Transcription factor IIIB 70 kDa subunit (BRF1), found in Saccharomyces cerevisiae (strain ATCC 204508 / S288c) (Baker's yeast).